A 212-amino-acid chain; its full sequence is Inner membrane-spanning protein YciB (212 aa).

Transmembrane regions (helical) follow at residues 19–39, 47–67, 82–102, 105–122, 147–167, and 177–197; these read FYGA…PVAL, AIYL…ALGL, AVIL…FILW, TLVN…PLFG, LAWV…AYTF, and LFGM…YLGL.

It belongs to the YciB family.

It localises to the cell inner membrane. Plays a role in cell envelope biogenesis, maintenance of cell envelope integrity and membrane homeostasis. In Thioalkalivibrio sulfidiphilus (strain HL-EbGR7), this protein is Inner membrane-spanning protein YciB.